Reading from the N-terminus, the 339-residue chain is Putative adenosine/adenine deaminase (339 aa).

Residues His-16, His-18, and His-200 each contribute to the Zn(2+) site. His-18 provides a ligand contact to substrate. Glu-203 acts as the Proton donor in catalysis. Residue Asp-281 coordinates Zn(2+). Asp-282 provides a ligand contact to substrate.

This sequence belongs to the metallo-dependent hydrolases superfamily. Adenosine and AMP deaminases family. The cofactor is Zn(2+).

Putative nucleoside deaminase. May catalyze the hydrolytic deamination of adenosine or some similar substrate and play a role in purine metabolism. In Streptomyces virginiae (Streptomyces cinnamonensis), this protein is Putative adenosine/adenine deaminase.